The primary structure comprises 220 residues: Adenylate kinase (220 aa).

Residue 13–18 coordinates ATP; sequence GAGKGT. An NMP region spans residues 33-62; sequence ATGDMLRSQVARQTELGKEAKKIMDQGGLV. AMP is bound by residues Thr34, Arg39, 60-62, 89-92, and Gln96; these read GLV and GFPR. Residues 130-167 are LID; it reads GRLVHPGSGRSYHLEFNPPKVPMKDDVTGEPLIQRSDD. Residues Arg131 and 140–141 each bind ATP; that span reads SY. The AMP site is built by Arg164 and Arg175. Gln203 serves as a coordination point for ATP.

Belongs to the adenylate kinase family. AK2 subfamily. As to quaternary structure, monomer.

The protein resides in the cytoplasm. It localises to the cytosol. The protein localises to the mitochondrion intermembrane space. It is found in the nucleus. It catalyses the reaction AMP + ATP = 2 ADP. Catalyzes the reversible transfer of the terminal phosphate group between ATP and AMP. Plays an important role in cellular energy homeostasis and in adenine nucleotide metabolism. Adenylate kinase activity is critical for regulation of the phosphate utilization and the AMP de novo biosynthesis pathways. This chain is Adenylate kinase (adk1), found in Schizosaccharomyces pombe (strain 972 / ATCC 24843) (Fission yeast).